The sequence spans 224 residues: Ribose-5-phosphate isomerase A (224 aa).

Residues 26 to 29 (TGST), 81 to 84 (DGAD), and 94 to 97 (KGGG) each bind substrate. Residue Glu-103 is the Proton acceptor of the active site. Lys-121 contributes to the substrate binding site.

This sequence belongs to the ribose 5-phosphate isomerase family. In terms of assembly, homodimer.

It catalyses the reaction aldehydo-D-ribose 5-phosphate = D-ribulose 5-phosphate. The protein operates within carbohydrate degradation; pentose phosphate pathway; D-ribose 5-phosphate from D-ribulose 5-phosphate (non-oxidative stage): step 1/1. Its function is as follows. Catalyzes the reversible conversion of ribose-5-phosphate to ribulose 5-phosphate. This is Ribose-5-phosphate isomerase A from Listeria innocua serovar 6a (strain ATCC BAA-680 / CLIP 11262).